The following is a 195-amino-acid chain: Putative EGF-like and EMI domain-containing protein 1 (195 aa).

The 12-residue stretch at 86–97 folds into the EGF-like domain; that stretch reads CTCKSGYQGNRC.

This is Putative EGF-like and EMI domain-containing protein 1 (EGFEM1P) from Homo sapiens (Human).